Here is a 311-residue protein sequence, read N- to C-terminus: MQDLAKPKIKIKSPAKINLHLEVIGKREDGFHELAMIMQNIDLSDYLEFEINNEGLIKLESDCNDLSLSDDNLIVKSANLLRKNSNINYGANIFLRKNIPIGAGLAGGSSNAAATLIGLNKLWNLDLDHGTLCSLASTLGSDIPFFINGGIQLCFGRGEILEKLDSNFEYGVILLKNPNVSVSTAETYKKYSNRFCDNHLNDRKMIENIRKNLRDNGLNKLNFDNQHLFIKNDLQLVVENENDSVKQALYLLSKLENCLTFSMSGSGPTCFALFKDIETAKKELTANSKFFKDKGYDSWVCTFLEKGITFI.

Lys-16 is a catalytic residue. Pro-100–Ser-110 serves as a coordination point for ATP. Asp-142 is a catalytic residue.

The protein belongs to the GHMP kinase family. IspE subfamily.

The catalysed reaction is 4-CDP-2-C-methyl-D-erythritol + ATP = 4-CDP-2-C-methyl-D-erythritol 2-phosphate + ADP + H(+). The protein operates within isoprenoid biosynthesis; isopentenyl diphosphate biosynthesis via DXP pathway; isopentenyl diphosphate from 1-deoxy-D-xylulose 5-phosphate: step 3/6. Catalyzes the phosphorylation of the position 2 hydroxy group of 4-diphosphocytidyl-2C-methyl-D-erythritol. The chain is 4-diphosphocytidyl-2-C-methyl-D-erythritol kinase from Prochlorococcus marinus (strain MIT 9301).